A 124-amino-acid polypeptide reads, in one-letter code: Small ribosomal subunit protein eS25 (124 aa).

Residues 1–22 show a composition bias toward basic and acidic residues; the sequence is PPKDDKKKKDAGKSAKKDKDPV. Residues 1 to 37 are disordered; that stretch reads PPKDDKKKKDAGKSAKKDKDPVNKSGGKAKKKKWSKG. Basic residues predominate over residues 27 to 37; it reads GKAKKKKWSKG. The residue at position 42 (K42) is an N6-acetyllysine. An N6-acetyllysine; alternate modification is found at K51. Residue K51 is modified to N6-succinyllysine; alternate. 2 positions are modified to N6-acetyllysine: K59 and K65. K93 is subject to N6-acetyllysine; alternate. An N6-succinyllysine; alternate modification is found at K93.

The protein belongs to the eukaryotic ribosomal protein eS25 family. As to quaternary structure, component of the small ribosomal subunit.

It is found in the cytoplasm. In terms of biological role, component of the small ribosomal subunit. The ribosome is a large ribonucleoprotein complex responsible for the synthesis of proteins in the cell. The protein is Small ribosomal subunit protein eS25 (RPS25) of Oryctolagus cuniculus (Rabbit).